A 157-amino-acid polypeptide reads, in one-letter code: Small ribosomal subunit protein uS7 (157 aa).

The protein belongs to the universal ribosomal protein uS7 family. As to quaternary structure, part of the 30S ribosomal subunit. Contacts proteins S9 and S11.

Its function is as follows. One of the primary rRNA binding proteins, it binds directly to 16S rRNA where it nucleates assembly of the head domain of the 30S subunit. Is located at the subunit interface close to the decoding center, probably blocks exit of the E-site tRNA. In Caldicellulosiruptor saccharolyticus (strain ATCC 43494 / DSM 8903 / Tp8T 6331), this protein is Small ribosomal subunit protein uS7.